The following is a 135-amino-acid chain: uncharacterized protein (135 aa).

Residues 1 to 36 (MSHAEKPMSDSVNHHHHRTFEVLTAEPVRSRRKPRH) are disordered.

Belongs to the transposase 8 family.

This is an uncharacterized protein from Sinorhizobium fredii (strain NBRC 101917 / NGR234).